We begin with the raw amino-acid sequence, 137 residues long: Ribosome-binding factor A (137 aa).

Belongs to the RbfA family. Monomer. Binds 30S ribosomal subunits, but not 50S ribosomal subunits or 70S ribosomes.

Its subcellular location is the cytoplasm. One of several proteins that assist in the late maturation steps of the functional core of the 30S ribosomal subunit. Associates with free 30S ribosomal subunits (but not with 30S subunits that are part of 70S ribosomes or polysomes). Required for efficient processing of 16S rRNA. May interact with the 5'-terminal helix region of 16S rRNA. The protein is Ribosome-binding factor A of Nitrobacter hamburgensis (strain DSM 10229 / NCIMB 13809 / X14).